A 154-amino-acid polypeptide reads, in one-letter code: Myoglobin (154 aa).

Residues 2–148 (GLSDGEWQLV…FRNDMAAKYK (147 aa)) form the Globin domain. Serine 4 carries the post-translational modification Phosphoserine. Histidine 65 is a nitrite binding site. An O2-binding site is contributed by histidine 65. Threonine 68 is modified (phosphothreonine). A heme b-binding site is contributed by histidine 94.

Belongs to the globin family. Monomeric.

It localises to the cytoplasm. The protein resides in the sarcoplasm. The enzyme catalyses Fe(III)-heme b-[protein] + nitric oxide + H2O = Fe(II)-heme b-[protein] + nitrite + 2 H(+). It carries out the reaction H2O2 + AH2 = A + 2 H2O. Its function is as follows. Monomeric heme protein which primary function is to store oxygen and facilitate its diffusion within muscle tissues. Reversibly binds oxygen through a pentacoordinated heme iron and enables its timely and efficient release as needed during periods of heightened demand. Depending on the oxidative conditions of tissues and cells, and in addition to its ability to bind oxygen, it also has a nitrite reductase activity whereby it regulates the production of bioactive nitric oxide. Under stress conditions, like hypoxia and anoxia, it also protects cells against reactive oxygen species thanks to its pseudoperoxidase activity. In Ochotona princeps (Southern American pika), this protein is Myoglobin (MB).